The sequence spans 143 residues: Large ribosomal subunit protein uL13 (143 aa).

This sequence belongs to the universal ribosomal protein uL13 family. As to quaternary structure, part of the 50S ribosomal subunit.

In terms of biological role, this protein is one of the early assembly proteins of the 50S ribosomal subunit, although it is not seen to bind rRNA by itself. It is important during the early stages of 50S assembly. This is Large ribosomal subunit protein uL13 from Thermoanaerobacter pseudethanolicus (strain ATCC 33223 / 39E) (Clostridium thermohydrosulfuricum).